We begin with the raw amino-acid sequence, 120 residues long: Large ribosomal subunit protein uL14 (120 aa).

It belongs to the universal ribosomal protein uL14 family. In terms of assembly, part of the 50S ribosomal subunit. Forms a cluster with proteins L3 and L19. In the 70S ribosome, L14 and L19 interact and together make contacts with the 16S rRNA in bridges B5 and B8.

Functionally, binds to 23S rRNA. Forms part of two intersubunit bridges in the 70S ribosome. The protein is Large ribosomal subunit protein uL14 of Dictyoglomus thermophilum (strain ATCC 35947 / DSM 3960 / H-6-12).